The sequence spans 964 residues: Glycine dehydrogenase (decarboxylating) (964 aa).

The segment covering Met1–Thr11 has biased composition (polar residues). Residues Met1–Leu21 are disordered. Lys713 carries the N6-(pyridoxal phosphate)lysine modification.

This sequence belongs to the GcvP family. As to quaternary structure, the glycine cleavage system is composed of four proteins: P, T, L and H. Pyridoxal 5'-phosphate serves as cofactor.

The catalysed reaction is N(6)-[(R)-lipoyl]-L-lysyl-[glycine-cleavage complex H protein] + glycine + H(+) = N(6)-[(R)-S(8)-aminomethyldihydrolipoyl]-L-lysyl-[glycine-cleavage complex H protein] + CO2. Its function is as follows. The glycine cleavage system catalyzes the degradation of glycine. The P protein binds the alpha-amino group of glycine through its pyridoxal phosphate cofactor; CO(2) is released and the remaining methylamine moiety is then transferred to the lipoamide cofactor of the H protein. The chain is Glycine dehydrogenase (decarboxylating) from Leptospira interrogans serogroup Icterohaemorrhagiae serovar copenhageni (strain Fiocruz L1-130).